Reading from the N-terminus, the 419-residue chain is Synaptic vesicle membrane protein VAT-1 homolog-like (419 aa).

Positions 1–25 (MAKEGVEKAEETEQMIEKEAGKEPA) are enriched in basic and acidic residues. 2 disordered regions span residues 1–36 (MAKE…SHRL) and 384–419 (PTPL…PFIQ). A Phosphoserine modification is found at Ser392. Phosphothreonine occurs at positions 393 and 395. Phosphoserine is present on Ser396. Residues 397–407 (EAGEEEEDHEG) are compositionally biased toward acidic residues. Residues 408-419 (DSENKERMPFIQ) are compositionally biased toward basic and acidic residues.

Belongs to the zinc-containing alcohol dehydrogenase family. Quinone oxidoreductase subfamily. Detected in skin fibroblasts.

This Homo sapiens (Human) protein is Synaptic vesicle membrane protein VAT-1 homolog-like (VAT1L).